Reading from the N-terminus, the 94-residue chain is Large ribosomal subunit protein eL14 (94 aa).

The protein belongs to the eukaryotic ribosomal protein eL14 family.

This chain is Large ribosomal subunit protein eL14, found in Methanopyrus kandleri (strain AV19 / DSM 6324 / JCM 9639 / NBRC 100938).